Consider the following 355-residue polypeptide: Probable dual-specificity RNA methyltransferase RlmN (355 aa).

E92 acts as the Proton acceptor in catalysis. The Radical SAM core domain maps to 98-330 (FHYGLSVCVT…TELGINCGVR (233 aa)). The cysteines at positions 105 and 341 are disulfide-linked. [4Fe-4S] cluster contacts are provided by C112, C116, and C119. S-adenosyl-L-methionine is bound by residues 164 to 165 (GE), S196, 219 to 221 (SLH), and N297. The S-methylcysteine intermediate role is filled by C341.

The protein belongs to the radical SAM superfamily. RlmN family. Requires [4Fe-4S] cluster as cofactor.

The protein localises to the cytoplasm. It carries out the reaction adenosine(2503) in 23S rRNA + 2 reduced [2Fe-2S]-[ferredoxin] + 2 S-adenosyl-L-methionine = 2-methyladenosine(2503) in 23S rRNA + 5'-deoxyadenosine + L-methionine + 2 oxidized [2Fe-2S]-[ferredoxin] + S-adenosyl-L-homocysteine. The enzyme catalyses adenosine(37) in tRNA + 2 reduced [2Fe-2S]-[ferredoxin] + 2 S-adenosyl-L-methionine = 2-methyladenosine(37) in tRNA + 5'-deoxyadenosine + L-methionine + 2 oxidized [2Fe-2S]-[ferredoxin] + S-adenosyl-L-homocysteine. Specifically methylates position 2 of adenine 2503 in 23S rRNA and position 2 of adenine 37 in tRNAs. This is Probable dual-specificity RNA methyltransferase RlmN from Oceanobacillus iheyensis (strain DSM 14371 / CIP 107618 / JCM 11309 / KCTC 3954 / HTE831).